The primary structure comprises 586 residues: Switch-associated protein 70 (586 aa).

The PH domain occupies 210–306; it reads DVLKQGYMLK…WIQAIQTTVS (97 aa). Residues 316 to 538 adopt a coiled-coil conformation; that stretch reads HKEARQKRKE…NNTRSWKDKV (223 aa).

In terms of assembly, the SWAP complex consists of NPM1, NCL, PARP1 and SWAP70. Tyrosine-phosphorylated.

Its subcellular location is the cytoplasm. It is found in the cell membrane. The protein resides in the nucleus. The protein localises to the cell projection. It localises to the lamellipodium. In terms of biological role, phosphatidylinositol 3,4,5-trisphosphate-dependent guanine nucleotide exchange factor (GEF) which, independently of RAS, transduces signals from tyrosine kinase receptors to RAC. It also mediates signaling of membrane ruffling. Regulates the actin cytoskeleton as an effector or adapter protein in response to agonist stimulated phosphatidylinositol (3,4)-bisphosphate production and cell protrusion. The sequence is that of Switch-associated protein 70 (SWAP70) from Gallus gallus (Chicken).